We begin with the raw amino-acid sequence, 661 residues long: ATP-dependent RNA helicase vasa (661 aa).

Residues 1 to 10 (MSDDWDDEPI) are compositionally biased toward acidic residues. The interval 1-186 (MSDDWDDEPI…RRRRNEDDIN (186 aa)) is disordered. Serine 22 is modified (phosphoserine). Threonine 27 carries the post-translational modification Phosphothreonine. 2 stretches are compositionally biased toward gly residues: residues 38 to 52 (DGVG…GYQG) and 60 to 83 (RIGG…GGFH). A compositionally biased stretch (basic and acidic residues) spans 85–95 (GRREGERDFRG). A run of 5 repeats spans residues 93–99 (FRGGEGG), 100–106 (FRGGQGG), 107–113 (SRGGQGG), 114–120 (SRGGQGG), and 121–127 (FRGGEGG). The interval 93 to 127 (FRGGEGGFRGGQGGSRGGQGGSRGGQGGFRGGEGG) is 5 X 7 AA tandem repeats of [FS]-R-G-G-[EQ]-G-G. The span at 96 to 129 (GEGGFRGGQGGSRGGQGGSRGGQGGFRGGEGGFR) shows a compositional bias: gly residues. The span at 131-172 (RLYENEDGDERRGRLDREERGGERRGRLDREERGGERGERGD) shows a compositional bias: basic and acidic residues. The short motif at 184-188 (DINNN) is the B30.2/SPRY domain-binding motif element. A required for posterior localization in oocyte region spans residues 184–203 (DINNNNNIVEDVERKREFYI). A Q motif motif is present at residues 245-273 (QHFTSADLRDIIIDNVNKSGYKIPTPIQK). The region spanning 276–453 (IPVISSGRDL…GEFLKNYVFV (178 aa)) is the Helicase ATP-binding domain. 289-296 (AQTGSGKT) serves as a coordination point for ATP. The short motif at 399–402 (DEAD) is the DEAD box element. The 148-residue stretch at 477 to 624 (KRSKLIEILS…TVPDFLRTCG (148 aa)) folds into the Helicase C-terminal domain.

The protein belongs to the DEAD box helicase family. DDX4/VASA subfamily. In terms of assembly, interacts with eIF5B and faf. Interacts with gus (via B30.2/SPRY domain) and Fsn (via B30.2/SPRY domain). Interacts with aub, me31B, eIF-4a and TER94. Interacts with piwi; this interaction is RNA independent. Interacts with Dcr-1 and Fmr1; these interactions occur in the polar granules. Mg(2+) serves as cofactor. Ubiquitinated during oogenesis. Deubiquitinated by faf, which protects this protein from proteasome-mediated degradation. As to expression, abundantly expressed in the female germline. Gus and faf are required for vas expression in the posterior pole of the oocyte.

The protein localises to the cytoplasm. It is found in the perinuclear region. It localises to the cytoplasmic ribonucleoprotein granule. It catalyses the reaction ATP + H2O = ADP + phosphate + H(+). Involved in translational control mechanisms operating in early stages of oogenesis. Required maternally in many stages of oogenesis, including cystocyte differentiation, oocyte differentiation, and specification of anterior-posterior polarity in the developing cysts. Essential for the formation and/or structural integrity of perinuclear nuage particles during germ cell formation. Required for gus, Fsn and aub accumulation at the posterior pole of the embryo. Required for the localization of vas to the perinuclear region of nurse cells. May have a role in production of piwi-interacting RNA (piRNA). This chain is ATP-dependent RNA helicase vasa, found in Drosophila melanogaster (Fruit fly).